Consider the following 350-residue polypeptide: fMet-Leu-Phe receptor (350 aa).

The Extracellular portion of the chain corresponds to 1–27 (METNSSLPTNISGGTPAVSAGYLFLDI). N-linked (GlcNAc...) asparagine glycosylation is found at asparagine 4 and asparagine 10. A helical membrane pass occupies residues 28–50 (ITYLVFAVTFVLGVLGNGLVIWV). At 51–61 (AGFRMTHTVTT) the chain is on the cytoplasmic side. Residues 62–83 (ISYLNLAVADFCFTSTLPFFMV) form a helical membrane-spanning segment. The Extracellular portion of the chain corresponds to 84–100 (RKAMGGHWPFGWFLCKF). The cysteines at positions 98 and 176 are disulfide-linked. Residues 101–121 (VFTIVDINLFGSVFLIALIAL) traverse the membrane as a helical segment. Over 122–140 (DRCVCVLHPVWTQNHRTVS) the chain is Cytoplasmic. The chain crosses the membrane as a helical span at residues 141 to 162 (LAKKVIIGPWVMALLLTLPVII). At 163-205 (RVTTVPGKTGTVACTFNFSPWTNDPKERINVAVAMLTVRGIIR) the chain is on the extracellular side. The helical transmembrane segment at 206–226 (FIIGFSAPMSIVAVSYGLIAT) threads the bilayer. The Cytoplasmic portion of the chain corresponds to 227–242 (KIHKQGLIKSSRPLRV). The helical transmembrane segment at 243 to 266 (LSFVAAAFFLCWSPYQVVALIATV) threads the bilayer. Over 267–285 (RIRELLQGMYKEIGIAVDV) the chain is Extracellular. Residues 286–305 (TSALAFFNSCLNPMLYVFMG) traverse the membrane as a helical segment. At 306–350 (QDFRERLIHALPASLERALTEDSTQTSDTATNSTLPSAEVELQAK) the chain is on the cytoplasmic side. A disordered region spans residues 325-350 (TEDSTQTSDTATNSTLPSAEVELQAK). Positions 326–341 (EDSTQTSDTATNSTLP) are enriched in polar residues. Serine 328 bears the Phosphoserine mark. A phosphothreonine mark is found at threonine 329 and threonine 331. Residue serine 332 is modified to Phosphoserine. Threonine 334 and threonine 336 each carry phosphothreonine. Serine 338 is modified (phosphoserine). A Phosphothreonine modification is found at threonine 339.

The protein belongs to the G-protein coupled receptor 1 family. In terms of assembly, interacts with S.aureus chemotaxis inhibitory protein (CHIPS); the interaction blocks the receptor and may thus inhibit the immune response. Phosphorylated; which is necessary for desensitization. Neutrophils.

The protein localises to the cell membrane. High affinity receptor for N-formyl-methionyl peptides (fMLP), which are powerful neutrophil chemotactic factors. Binding of fMLP to the receptor stimulates intracellular calcium mobilization and superoxide anion release. This response is mediated via a G-protein that activates a phosphatidylinositol-calcium second messenger system. Receptor for TAFA4, mediates its effects on chemoattracting macrophages, promoting phagocytosis and increasing ROS release. Receptor for cathepsin CTSG, leading to increased phagocyte chemotaxis. This chain is fMet-Leu-Phe receptor (FPR1), found in Homo sapiens (Human).